Here is a 147-residue protein sequence, read N- to C-terminus: D-aminoacyl-tRNA deacylase (147 aa).

The Gly-cisPro motif, important for rejection of L-amino acids signature appears at 137 to 138; it reads GP.

Belongs to the DTD family. Homodimer.

Its subcellular location is the cytoplasm. The enzyme catalyses glycyl-tRNA(Ala) + H2O = tRNA(Ala) + glycine + H(+). It carries out the reaction a D-aminoacyl-tRNA + H2O = a tRNA + a D-alpha-amino acid + H(+). In terms of biological role, an aminoacyl-tRNA editing enzyme that deacylates mischarged D-aminoacyl-tRNAs. Also deacylates mischarged glycyl-tRNA(Ala), protecting cells against glycine mischarging by AlaRS. Acts via tRNA-based rather than protein-based catalysis; rejects L-amino acids rather than detecting D-amino acids in the active site. By recycling D-aminoacyl-tRNA to D-amino acids and free tRNA molecules, this enzyme counteracts the toxicity associated with the formation of D-aminoacyl-tRNA entities in vivo and helps enforce protein L-homochirality. This chain is D-aminoacyl-tRNA deacylase, found in Bacillus velezensis (strain DSM 23117 / BGSC 10A6 / LMG 26770 / FZB42) (Bacillus amyloliquefaciens subsp. plantarum).